Here is a 1159-residue protein sequence, read N- to C-terminus: Ferroxidase HEPHL1 (1159 aa).

The first 24 residues, 1-24 (MPRKQPAGCIFLLTFLGLSGLVGT), serve as a signal peptide directing secretion. Plastocyanin-like domains are found at residues 25-207 (VTRT…LLVC), 218-366 (TRND…VDNC), 379-561 (QRRY…LLVC), 571-719 (TQKG…VSSC), 731-907 (MIRT…LITC), and 915-1092 (KGRR…VPSN). Over 25 to 1114 (VTRTYYIGIV…KNLGPTGAKA (1090 aa)) the chain is Extracellular. Positions 127 and 129 each coordinate Cu cation. A glycan (N-linked (GlcNAc...) asparagine) is linked at N161. C181 and C207 are disulfide-bonded. 2 residues coordinate Cu cation: H187 and H189. An N-linked (GlcNAc...) asparagine glycan is attached at N236. The cysteines at positions 285 and 366 are disulfide-linked. Residues H304, C347, and H352 each contribute to the Cu cation site. Residue N407 is glycosylated (N-linked (GlcNAc...) asparagine). Residues C535 and C561 are joined by a disulfide bond. N589 is a glycosylation site (N-linked (GlcNAc...) asparagine). C638 and C719 are joined by a disulfide. Residues H657, C700, H705, and M710 each contribute to the Cu cation site. The N-linked (GlcNAc...) asparagine glycan is linked to N772. C881 and C907 form a disulfide bridge. The N-linked (GlcNAc...) asparagine glycan is linked to N935. Cu cation is bound by residues H1003, H1006, H1008, H1048, C1049, H1050, H1054, and M1059. Residues 1115-1135 (ALVILFIIGLLLLITTVILSL) form a helical membrane-spanning segment. At 1136 to 1159 (RLCSAMKQTDYQQVQSCALPTDAL) the chain is on the cytoplasmic side.

This sequence belongs to the multicopper oxidase family. Cu cation serves as cofactor.

The protein localises to the membrane. It carries out the reaction 4 Fe(2+) + O2 + 4 H(+) = 4 Fe(3+) + 2 H2O. Functionally, is a copper-binding glycoprotein with ferroxidase activity. It oxidizes Fe(2+) to Fe(3+) without releasing radical oxygen species. May be involved in the regulation of intracellular iron content. This is Ferroxidase HEPHL1 (HEPHL1) from Homo sapiens (Human).